A 422-amino-acid polypeptide reads, in one-letter code: Tyrosine--tRNA ligase 1 (422 aa).

Residue Tyr36 participates in L-tyrosine binding. Residues 41-50 (PTAGSLHIGH) carry the 'HIGH' region motif. L-tyrosine contacts are provided by Tyr173 and Gln177. A 'KMSKS' region motif is present at residues 233-237 (KFGKT). ATP is bound at residue Lys236. In terms of domain architecture, S4 RNA-binding spans 355–419 (SDVVTLLLET…GKKQFAMVKL (65 aa)).

The protein belongs to the class-I aminoacyl-tRNA synthetase family. TyrS type 1 subfamily. In terms of assembly, homodimer.

Its subcellular location is the cytoplasm. The catalysed reaction is tRNA(Tyr) + L-tyrosine + ATP = L-tyrosyl-tRNA(Tyr) + AMP + diphosphate + H(+). In terms of biological role, catalyzes the attachment of tyrosine to tRNA(Tyr) in a two-step reaction: tyrosine is first activated by ATP to form Tyr-AMP and then transferred to the acceptor end of tRNA(Tyr). The sequence is that of Tyrosine--tRNA ligase 1 from Vibrio vulnificus (strain YJ016).